We begin with the raw amino-acid sequence, 181 residues long: Ribonuclease HII (181 aa).

In terms of domain architecture, RNase H type-2 spans 1–181 (MICGIDEVGR…SLHRKNFKLI (181 aa)). Residues Asp-6, Glu-7, and Asp-98 each coordinate a divalent metal cation.

This sequence belongs to the RNase HII family. It depends on Mn(2+) as a cofactor. Mg(2+) serves as cofactor.

The protein localises to the cytoplasm. The enzyme catalyses Endonucleolytic cleavage to 5'-phosphomonoester.. In terms of biological role, endonuclease that specifically degrades the RNA of RNA-DNA hybrids. The sequence is that of Ribonuclease HII from Borreliella afzelii (strain PKo) (Borrelia afzelii).